The chain runs to 827 residues: MTTLTSLQRSEAQRNHIVDLIDKACLRIAPIWPLDSFVAVNPYLGLIDQPFDTVGRYLEQTVGESLFMDHGWFADKIAQGEITDDDLAQAAQQLDPSISLDTIKQQLAVHRQPAPALPLVTNELDRRDAPPVSEFVIEQVSQFMANYYDRGQALWHLPKEASASLFAQWRRYTLINRSASAVGLKQVRQHLLAVPSDAIDALFWALDQINLPESRLPDYLFTLLKTIGGWASWCRYLHFQAGLHGESQHDLRDLLIIRLVWVALVIKETSSAGRQQWRAKLNDWFDPAKLVASPSATATASTKAQSSRIDEILLAAAEQAFRRRINAGLNRQPADAPDQQAERPTVQAAFCIDVRSEVFRRHLEASSPGLETIGFAGFFGLPIDYCRMGESEARLQNPVLINPAYRAQETGDPAIAQHRHARQSRGAIWKQFKLSAASCFTFVESAGLSYVPRLLADSLGWHRSSLPPDAPGLTPEERARLHPQLVKLDGGALSTQEKVDLAEKVLRGLGLTHTFAPIVLLAGHGSSTTNNPHRAGLDCGACAGQAGDVNARVAVQLLNEAAVRLGLIERGIAIPRDTRFVAALHDTTTDHIELLDLDQSGIESDQLSSLTQALKQAGELTRLERLVTLEAQVDTVDAEKQATFRGRDWSQVRPEWGLAGNAAFIAAPRWRTRGLDLGGRAFLHDYDWRHDKEFGVLNVIMTAPLIVANWINLQYYGSTVDNLHQGAGNKVLHNVVGGTVGVIEGNGGDLRVGLAMQSLHDGEQWRHEPLRLSAYIEAPIAEIDKIIAGHDMLNALINNRWMHILHIDDNGIPHRRHAHGDWRPEPI.

The Zn(2+) site is built by C351, D353, H524, and C539.

This sequence belongs to the inorganic carbon transporter (TC 9.A.2) DabA family. In terms of assembly, forms a complex with DabB2, possibly a heterodimer. The cofactor is Zn(2+).

The protein localises to the cell inner membrane. Its activity is regulated as follows. Uptake of inorganic carbon by cells in the presence of thiosulphate is fully inhibited by the uncouplers carbonyl cyanide m-chlorophenyl hydrazone (CCCP), carbonyl cyanide p-trifluoromethoxyphenyl hydrazone (FCCP), S13 or SF6847. Not inhibited by the ATPase inhibitor N,N-dicyclohexylcarbodiimide (DCCD). Inorganic carbon uptake is inhibited by the ionophore CCCP, suggesting uptake is coupled to a cation gradient. In terms of biological role, part of an energy-coupled inorganic carbon pump; its substrate may be carbon dioxide. Expression of both dabA2 and dabB2 (DAB2) restores growth in ambient air to E.coli deleted of its carbonic anhydrase genes (called CAfree, deletion of 'can' and 'cynT'); neither dabA2 or dabB2 alone is sufficient. Rescue is pH-independent, suggesting it transports CO(2) and not carbonate ions. Together the genes allow greater than normal uptake of inorganic carbon by E.coli. Uptake of carbon dioxide rather than bicarbonate has been suggested based on kinetic calculations. The polypeptide is Probable inorganic carbon transporter subunit DabA2 (Halothiobacillus neapolitanus (strain ATCC 23641 / c2) (Thiobacillus neapolitanus)).